The primary structure comprises 275 residues: NH(3)-dependent NAD(+) synthetase (275 aa).

Residue 50–57 coordinates ATP; that stretch reads GISGGVDS. Asp56 contacts Mg(2+). Residue Arg147 participates in deamido-NAD(+) binding. Thr167 serves as a coordination point for ATP. Glu172 lines the Mg(2+) pocket. Deamido-NAD(+)-binding residues include Lys180 and Asp187. Residues Lys196 and Thr218 each contribute to the ATP site. 267 to 268 is a binding site for deamido-NAD(+); it reads HK.

This sequence belongs to the NAD synthetase family. As to quaternary structure, homodimer.

The catalysed reaction is deamido-NAD(+) + NH4(+) + ATP = AMP + diphosphate + NAD(+) + H(+). It functions in the pathway cofactor biosynthesis; NAD(+) biosynthesis; NAD(+) from deamido-NAD(+) (ammonia route): step 1/1. Catalyzes the ATP-dependent amidation of deamido-NAD to form NAD. Uses ammonia as a nitrogen source. The chain is NH(3)-dependent NAD(+) synthetase from Pseudomonas putida (strain ATCC 47054 / DSM 6125 / CFBP 8728 / NCIMB 11950 / KT2440).